The following is a 199-amino-acid chain: Charged multivesicular body protein 1b (199 aa).

Coiled coils occupy residues 10–30 (NLKF…KEEK) and 178–199 (TSVA…RDQV). Positions 167–199 (ELPQGQTGSVGTSVASAEQDELSQRLAKLRDQV) are disordered. A compositionally biased stretch (polar residues) spans 170–182 (QGQTGSVGTSVAS). Residues 186–196 (DELSQRLAKLR) carry the MIT-interacting motif motif.

Belongs to the SNF7 family. In terms of assembly, probable peripherally associated component of the endosomal sorting required for transport complex III (ESCRT-III).

The protein resides in the cytoplasm. The protein localises to the cytosol. It is found in the endosome. Its subcellular location is the late endosome membrane. In terms of biological role, probable peripherally associated component of the endosomal sorting required for transport complex III (ESCRT-III) which is involved in multivesicular bodies (MVBs) formation and sorting of endosomal cargo proteins into MVBs. MVBs contain intraluminal vesicles (ILVs) that are generated by invagination and scission from the limiting membrane of the endosome and mostly are delivered to lysosomes enabling degradation of membrane proteins, such as stimulated growth factor receptors, lysosomal enzymes and lipids. This chain is Charged multivesicular body protein 1b (chmp1b), found in Danio rerio (Zebrafish).